The primary structure comprises 84 residues: uncharacterized protein (84 aa).

This is an uncharacterized protein from Bos taurus (Bovine).